A 131-amino-acid chain; its full sequence is Small ribosomal subunit protein uS11 (131 aa).

Belongs to the universal ribosomal protein uS11 family. Part of the 30S ribosomal subunit.

In terms of biological role, located on the platform of the 30S subunit. This is Small ribosomal subunit protein uS11 from Methanospirillum hungatei JF-1 (strain ATCC 27890 / DSM 864 / NBRC 100397 / JF-1).